The sequence spans 334 residues: N-acetyl-gamma-glutamyl-phosphate reductase (334 aa).

The active site involves cysteine 154.

Belongs to the NAGSA dehydrogenase family. Type 1 subfamily.

The protein localises to the cytoplasm. The enzyme catalyses N-acetyl-L-glutamate 5-semialdehyde + phosphate + NADP(+) = N-acetyl-L-glutamyl 5-phosphate + NADPH + H(+). Its pathway is amino-acid biosynthesis; L-arginine biosynthesis; N(2)-acetyl-L-ornithine from L-glutamate: step 3/4. Functionally, catalyzes the NADPH-dependent reduction of N-acetyl-5-glutamyl phosphate to yield N-acetyl-L-glutamate 5-semialdehyde. This is N-acetyl-gamma-glutamyl-phosphate reductase from Escherichia coli (strain K12).